Reading from the N-terminus, the 344-residue chain is Small ribosomal subunit protein uS3 (344 aa).

Residues 38 to 106 form the KH type-2 domain; sequence LKAALRERLK…EVFIDIQEVH (69 aa). Positions 217–344 are disordered; the sequence is PEPEPRREQR…QKPEGSGENQ (128 aa). Basic and acidic residues-rich tracts occupy residues 219 to 259 and 335 to 344; these read PEPR…RGDR and QKPEGSGENQ.

This sequence belongs to the universal ribosomal protein uS3 family. Part of the 30S ribosomal subunit. Forms a tight complex with proteins S10 and S14.

Binds the lower part of the 30S subunit head. Binds mRNA in the 70S ribosome, positioning it for translation. The polypeptide is Small ribosomal subunit protein uS3 (Solibacter usitatus (strain Ellin6076)).